The chain runs to 332 residues: Probable cytosolic iron-sulfur protein assembly protein 1 (332 aa).

WD repeat units lie at residues 9 to 48 (GHTD…LVTT), 52 to 93 (GHNR…WQFL), 98 to 137 (GHEN…DEFE), 144 to 183 (DHTQ…WICV), 188 to 230 (GHES…GGTG), 257 to 295 (AHTR…QWVV), and 302 to 332 (AHGV…IWEV).

This sequence belongs to the WD repeat CIA1 family. In terms of assembly, interacts with NAR1.

The protein localises to the cytoplasm. The protein resides in the nucleus. In terms of biological role, essential component of the cytosolic iron-sulfur (Fe/S) protein assembly machinery. Required for the maturation of extramitochondrial Fe/S proteins. This chain is Probable cytosolic iron-sulfur protein assembly protein 1, found in Yarrowia lipolytica (strain CLIB 122 / E 150) (Yeast).